The following is a 122-amino-acid chain: Large ribosomal subunit protein bL12 (122 aa).

Belongs to the bacterial ribosomal protein bL12 family. As to quaternary structure, homodimer. Part of the ribosomal stalk of the 50S ribosomal subunit. Forms a multimeric L10(L12)X complex, where L10 forms an elongated spine to which 2 to 4 L12 dimers bind in a sequential fashion. Binds GTP-bound translation factors.

In terms of biological role, forms part of the ribosomal stalk which helps the ribosome interact with GTP-bound translation factors. Is thus essential for accurate translation. The chain is Large ribosomal subunit protein bL12 from Stenotrophomonas maltophilia (strain K279a).